Here is a 353-residue protein sequence, read N- to C-terminus: Probable dual-specificity RNA methyltransferase RlmN (353 aa).

Glu95 functions as the Proton acceptor in the catalytic mechanism. The Radical SAM core domain occupies 103–333 (DGGRKTICIS…PILNRRSPGR (231 aa)). Cys110 and Cys339 are disulfide-bonded. [4Fe-4S] cluster-binding residues include Cys117, Cys121, and Cys124. S-adenosyl-L-methionine contacts are provided by residues 164–165 (GE), Ser196, 219–221 (SLN), and Asn296. Cys339 functions as the S-methylcysteine intermediate in the catalytic mechanism.

The protein belongs to the radical SAM superfamily. RlmN family. [4Fe-4S] cluster serves as cofactor.

The protein resides in the cytoplasm. The catalysed reaction is adenosine(2503) in 23S rRNA + 2 reduced [2Fe-2S]-[ferredoxin] + 2 S-adenosyl-L-methionine = 2-methyladenosine(2503) in 23S rRNA + 5'-deoxyadenosine + L-methionine + 2 oxidized [2Fe-2S]-[ferredoxin] + S-adenosyl-L-homocysteine. It catalyses the reaction adenosine(37) in tRNA + 2 reduced [2Fe-2S]-[ferredoxin] + 2 S-adenosyl-L-methionine = 2-methyladenosine(37) in tRNA + 5'-deoxyadenosine + L-methionine + 2 oxidized [2Fe-2S]-[ferredoxin] + S-adenosyl-L-homocysteine. Its function is as follows. Specifically methylates position 2 of adenine 2503 in 23S rRNA and position 2 of adenine 37 in tRNAs. The sequence is that of Probable dual-specificity RNA methyltransferase RlmN from Leptospira biflexa serovar Patoc (strain Patoc 1 / Ames).